We begin with the raw amino-acid sequence, 289 residues long: Heme oxygenase 1 (289 aa).

The span at 1–12 (MERPQPDSSMPQ) shows a compositional bias: polar residues. The segment at 1 to 24 (MERPQPDSSMPQDLSEALKEATKE) is disordered. Topologically, residues 1-266 (MERPQPDSSM…KPQPSVLSQA (266 aa)) are cytoplasmic. 4 residues coordinate heme b: Lys19, His26, Tyr135, and Arg184. The segment at 239-261 (RRAGSKVQDLAPTKASRGKPQPS) is disordered. Ser243 carries the phosphoserine modification. A helical; Anchor for type IV membrane protein transmembrane segment spans residues 267–289 (PLLRWVLTLSFLVATVAVGLYAM).

Belongs to the heme oxygenase family. Homodimer and higher order homooligomer. Oligomerization is crucial for its stability and function in the endoplasmic reticulum. Interacts with FLVCR2; this interaction is potentiated in the presence of heme. Post-translationally, a soluble form arises by proteolytic removal of the membrane anchor.

It localises to the endoplasmic reticulum membrane. The catalysed reaction is heme b + 3 reduced [NADPH--hemoprotein reductase] + 3 O2 = biliverdin IXalpha + CO + Fe(2+) + 3 oxidized [NADPH--hemoprotein reductase] + 3 H2O + H(+). With respect to regulation, inhibited by metalloporphyrins such as Sn-, Co-, Mn- and Zn-protoporphyrins. Catalyzes the oxidative cleavage of heme at the alpha-methene bridge carbon, released as carbon monoxide (CO), to generate biliverdin IXalpha, while releasing the central heme iron chelate as ferrous iron. Affords protection against programmed cell death and this cytoprotective effect relies on its ability to catabolize free heme and prevent it from sensitizing cells to undergo apoptosis. In terms of biological role, catalyzes the oxidative cleavage of heme at the alpha-methene bridge carbon, released as carbon monoxide (CO), to generate biliverdin IXalpha, while releasing the central heme iron chelate as ferrous iron. The chain is Heme oxygenase 1 (HMOX1) from Bos taurus (Bovine).